The following is a 199-amino-acid chain: MISGPNCLRVGQLAPDFSATAVYDQEFKTLKLSDLKNKYIVLFFYPLDFTFVCPTEITAFSDKYNAFSELNTEVLGVSVDSEYSHLAWLQTDRESGGLGDLSYPLVSDLKKEISAAYNVLNSDGVALRGLFIIDPKGIIQYSTINNLEFGRSVEETLRVLQAIQYVQSHPDEVCPANWKPGDKTMNPDPIKSKNYFAAA.

The Thioredoxin domain occupies 8-165 (LRVGQLAPDF…TLRVLQAIQY (158 aa)). C53 functions as the Cysteine sulfenic acid (-SOH) intermediate in the catalytic mechanism.

This sequence belongs to the peroxiredoxin family. AhpC/Prx1 subfamily. Homodimer; disulfide-linked, upon oxidation. In terms of processing, the Cys-53-SH group is the primary site of oxidation by H(2)O(2), and the oxidized Cys-53 (probably Cys-SOH) rapidly reacts with Cys-174-SH of the other subunit to form an intermolecular disulfide. This disulfide is subsequently reduced by thioredoxin.

It is found in the plastid. The protein resides in the chloroplast. The catalysed reaction is a hydroperoxide + [thioredoxin]-dithiol = an alcohol + [thioredoxin]-disulfide + H2O. Its function is as follows. Thiol-specific peroxidase that catalyzes the reduction of hydrogen peroxide and organic hydroperoxides to water and alcohols, respectively. Plays a role in cell protection against oxidative stress by detoxifying peroxides. The protein is Putative peroxiredoxin ycf42 (ycf42) of Pyropia yezoensis (Susabi-nori).